The primary structure comprises 525 residues: CTP synthase (525 aa).

Positions 1–269 (MKYIIVTGGV…ADAITTHLHL (269 aa)) are amidoligase domain. Ser-12 is a binding site for CTP. Ser-12 contributes to the UTP binding site. Residues 13–18 (GLGKGI) and Asp-70 contribute to the ATP site. The Mg(2+) site is built by Asp-70 and Glu-144. Residues 151 to 153 (DIE), 190 to 195 (KTKPTQ), and Lys-226 each bind CTP. UTP is bound by residues 190–195 (KTKPTQ) and Lys-226. One can recognise a Glutamine amidotransferase type-1 domain in the interval 292–524 (VAIVSKYGIE…VSACRKNKKT (233 aa)). Gly-348 serves as a coordination point for L-glutamine. Catalysis depends on Cys-375, which acts as the Nucleophile; for glutamine hydrolysis. L-glutamine is bound by residues 376–379 (LGFQ), Glu-399, and Arg-454. Residues His-497 and Glu-499 contribute to the active site.

It belongs to the CTP synthase family. In terms of assembly, homotetramer.

It catalyses the reaction UTP + L-glutamine + ATP + H2O = CTP + L-glutamate + ADP + phosphate + 2 H(+). The enzyme catalyses L-glutamine + H2O = L-glutamate + NH4(+). The catalysed reaction is UTP + NH4(+) + ATP = CTP + ADP + phosphate + 2 H(+). The protein operates within pyrimidine metabolism; CTP biosynthesis via de novo pathway; CTP from UDP: step 2/2. Allosterically activated by GTP, when glutamine is the substrate; GTP has no effect on the reaction when ammonia is the substrate. The allosteric effector GTP functions by stabilizing the protein conformation that binds the tetrahedral intermediate(s) formed during glutamine hydrolysis. Inhibited by the product CTP, via allosteric rather than competitive inhibition. In terms of biological role, catalyzes the ATP-dependent amination of UTP to CTP with either L-glutamine or ammonia as the source of nitrogen. Regulates intracellular CTP levels through interactions with the four ribonucleotide triphosphates. This Methanosphaerula palustris (strain ATCC BAA-1556 / DSM 19958 / E1-9c) protein is CTP synthase.